A 205-amino-acid polypeptide reads, in one-letter code: Imidazole glycerol phosphate synthase subunit HisH (205 aa).

The Glutamine amidotransferase type-1 domain occupies 1–205; that stretch reads MITIVDYQMG…RFATAPVEVA (205 aa). The Nucleophile role is filled by cysteine 79. Residues histidine 182 and glutamate 184 contribute to the active site.

Heterodimer of HisH and HisF.

Its subcellular location is the cytoplasm. The enzyme catalyses 5-[(5-phospho-1-deoxy-D-ribulos-1-ylimino)methylamino]-1-(5-phospho-beta-D-ribosyl)imidazole-4-carboxamide + L-glutamine = D-erythro-1-(imidazol-4-yl)glycerol 3-phosphate + 5-amino-1-(5-phospho-beta-D-ribosyl)imidazole-4-carboxamide + L-glutamate + H(+). It carries out the reaction L-glutamine + H2O = L-glutamate + NH4(+). It functions in the pathway amino-acid biosynthesis; L-histidine biosynthesis; L-histidine from 5-phospho-alpha-D-ribose 1-diphosphate: step 5/9. In terms of biological role, IGPS catalyzes the conversion of PRFAR and glutamine to IGP, AICAR and glutamate. The HisH subunit catalyzes the hydrolysis of glutamine to glutamate and ammonia as part of the synthesis of IGP and AICAR. The resulting ammonia molecule is channeled to the active site of HisF. In Rhodopirellula baltica (strain DSM 10527 / NCIMB 13988 / SH1), this protein is Imidazole glycerol phosphate synthase subunit HisH.